Consider the following 131-residue polypeptide: Probable ATP synthase subunit g 1, mitochondrial (131 aa).

It belongs to the ATPase g subunit family. In terms of assembly, subunit of the F-type ATPase which has 2 components, CF(1) - the catalytic core - and CF(0) - the membrane proton channel.

It is found in the mitochondrion membrane. Mitochondrial membrane ATP synthase (F(1)F(0) ATP synthase or Complex V) produces ATP from ADP in the presence of a proton gradient across the membrane which is generated by electron transport complexes of the respiratory chain. F-type ATPases consist of two structural domains, F(1) - containing the extramembraneous catalytic core, and F(0) - containing the membrane proton channel, linked together by a central stalk and a peripheral stalk. During catalysis, ATP synthesis in the catalytic domain of F(1) is coupled via a rotary mechanism of the central stalk subunits to proton translocation. Part of the complex F(0) domain. Minor subunit located with subunit a in the membrane. This Caenorhabditis elegans protein is Probable ATP synthase subunit g 1, mitochondrial.